We begin with the raw amino-acid sequence, 64 residues long: MPDVKCVCCKEGKECACKGKECCTTGECCKDGTCCGKCTNAACKCADGCKCGSGCSCTEGNCAC.

It belongs to the metallothionein superfamily. Type 4 family.

In terms of biological role, metallothioneins have a high content of cysteine residues that bind various heavy metals. In Sterechinus neumayeri (Antarctic sea urchin), this protein is Metallothionein.